The following is a 323-amino-acid chain: Voltage-dependent calcium channel gamma-2 subunit (323 aa).

Residues 10 to 30 (MLLTTVGAFAAFSLMTIAVGT) form a helical membrane-spanning segment. An N-linked (GlcNAc...) asparagine glycan is attached at N48. Helical transmembrane passes span 104–124 (SSIFPILSVILLFMGGLCIAA), 134–154 (IILSAGIFFVSAGLSNIIGII), and 182–202 (FGALSFIIAEMVGVLAVHMFI). The segment at 233–261 (YQRRSRSSSRSTEPSHSRDASPVGVKGFN) is disordered. At S253 the chain carries Phosphoserine. The residue at position 271 (Y271) is a Phosphotyrosine. Phosphothreonine; by PKA is present on T321.

It belongs to the PMP-22/EMP/MP20 family. CACNG subfamily. As to quaternary structure, the L-type calcium channel is composed of five subunits: alpha-1, alpha-2/delta, beta and gamma. Interacts with the PDZ domains of DLG4/PSD-95 and DLG1/SAP97. May interact with GOPC. Acts as an auxiliary subunit for AMPA-selective glutamate receptors (AMPARs). Found in a complex with GRIA1, GRIA2, GRIA3, GRIA4, CNIH2, CNIH3, CACNG3, CACNG4, CACNG5, CACNG7 and CACNG8. Interacts with GRIA1 and GRIA2. Interacts with MPP2. Phosphorylation of Thr-321 by PKA impairs interaction with DLG1 and DLG4. As to expression, brain.

The protein resides in the membrane. It localises to the synapse. It is found in the synaptosome. In terms of biological role, regulates the trafficking and gating properties of AMPA-selective glutamate receptors (AMPARs). Promotes their targeting to the cell membrane and synapses and modulates their gating properties by slowing their rates of activation, deactivation and desensitization. Does not show subunit-specific AMPA receptor regulation and regulates all AMPAR subunits. Thought to stabilize the calcium channel in an inactivated (closed) state. The chain is Voltage-dependent calcium channel gamma-2 subunit (Cacng2) from Mus musculus (Mouse).